The chain runs to 192 residues: MLILASQSPRRAELLSQIGVPFTTLSADIDETILPGETPEIYVQRLAKQKAQAGWQASVDIAENRLALGADTVVVIHEQVLGKPENFDDARRMLQRLSGQKHQVFTAVTITSGDQCESILVKTDVTFCDLTTSQIEEYWQTGEPRDKAGSYAIQGIGGKFVTHIKGSYSAVVGLPLYETNQLLSRMSLAHEC.

The Proton acceptor role is filled by Asp71.

Belongs to the Maf family. YhdE subfamily. It depends on a divalent metal cation as a cofactor.

It localises to the cytoplasm. The enzyme catalyses dTTP + H2O = dTMP + diphosphate + H(+). It carries out the reaction UTP + H2O = UMP + diphosphate + H(+). Functionally, nucleoside triphosphate pyrophosphatase that hydrolyzes dTTP and UTP. May have a dual role in cell division arrest and in preventing the incorporation of modified nucleotides into cellular nucleic acids. This chain is dTTP/UTP pyrophosphatase, found in Pseudoalteromonas atlantica (strain T6c / ATCC BAA-1087).